Here is a 441-residue protein sequence, read N- to C-terminus: Glutamate--tRNA ligase 1 (441 aa).

The short motif at 8–18 is the 'HIGH' region element; that stretch reads PSPTGHIHVGN. The 'KMSKS' region motif lies at 239–243; sequence ELSKR. K242 is an ATP binding site.

The protein belongs to the class-I aminoacyl-tRNA synthetase family. Glutamate--tRNA ligase type 1 subfamily. Monomer.

Its subcellular location is the cytoplasm. The enzyme catalyses tRNA(Glu) + L-glutamate + ATP = L-glutamyl-tRNA(Glu) + AMP + diphosphate. In terms of biological role, catalyzes the attachment of glutamate to tRNA(Glu) in a two-step reaction: glutamate is first activated by ATP to form Glu-AMP and then transferred to the acceptor end of tRNA(Glu). The chain is Glutamate--tRNA ligase 1 from Paracoccus denitrificans (strain Pd 1222).